Here is a 902-residue protein sequence, read N- to C-terminus: MKIAVIGQSLFGQEVYCHLRKEGHEVVGGFTVPDKDGKADPLGLEAEKDGVPVFKFSRWRAKGQALPDVVAKYQALGAELNVLPFCSQFIPMEIINAPQHGSIIYHPSLLPRHRGASAINWTLIHGDKKGGFSIFWADDGLDTGDLLLQKECEVLPDDTVSTLYNRFLFPEGIKGMVQAVRLIAEGKAPRLPQPEEGATYEGIQKKETAKINWDQPAEAIHNWIRGNDKVPGAWTEACEQKLTFFNSTLNTSGLVPEGDALPIPGAHRPGVVTKAGLILFGNDDKMLLVKNIQLEDGKMILASNFFKGAASSALELTEAELVTAEAVRSVWQRILPNVLEVEDSTDFFKSGAASVDVVRLVEEVKELCDGLELENEDVYMASTFGDFIQLLVRKLRGDDEEGECSIDYVEMAVNKRTIRIPHQLFIGGEFVDAEGAKTYETINPTDGSVICQVSLAQVTDVDKAVAAAKDAFENGRWGKISARDRGRLLYRLADLMEQHQEELATIEALDAGAVYTLALKTHVGMSIQTFRYFAGWCDKIQGSTIPINQARPNRNLTLTRKEPVGVCGIIIPWNYPLMMLSWKTAACLAAGNTVVIKPAQVTPLTALKFAELTLKAGIPKGVVNVLPGSGSLVGQRLSDHPDVRKIGFTGSTEVGKHIMKSCAISNVKKVSLELGGKSPLIIFADCDLNKAVQMGMSSVFFNKGENCIAAGRLFVEDSIHDEFVRRVVEEVRKMKVGDPLDRDTDHGPQNHHAHLMKLMEYCQRGVKEGATLVCGGNQVPRPGFFFEPTVFTDVEDHMFIAKEESFGPVMIISRFADGDVDTVLSRANATEFGLASGVFTRDINKALYVSDKLQAGTVFVNTYNKTDVAAPFGGFKQSGFGKDLGEAALNEYLRVKTVTFEY.

Positions 1–310 (MKIAVIGQSL…LASNFFKGAA (310 aa)) are hydrolase domain. Residue Ser-9 is modified to Phosphoserine. Lys-38 bears the N6-succinyllysine mark. 88 to 90 (QFI) contributes to the (6R)-10-formyltetrahydrofolate binding site. The active-site Proton donor is His-106. Residue Asp-142 participates in (6R)-10-formyltetrahydrofolate binding. One can recognise a Carrier domain in the interval 318 to 395 (EAELVTAEAV…DFIQLLVRKL (78 aa)). O-(pantetheine 4'-phosphoryl)serine is present on Ser-354. Residues 417-902 (TIRIPHQLFI…LRVKTVTFEY (486 aa)) are aldehyde dehydrogenase domain. Residues 571–573 (IPW) and 597–600 (KPAQ) each bind NADP(+). A phosphoserine mark is found at Ser-629 and Ser-631. NADP(+) is bound by residues 630–635 (GSLVGQ) and 650–651 (GS). Position 660 is an N6-succinyllysine (Lys-660). The active-site Proton acceptor is the Glu-673. Residue 673–674 (EL) coordinates NADP(+). Cys-707 (proton donor) is an active-site residue. NADP(+) is bound at residue Lys-757. At Lys-767 the chain carries N6-succinyllysine. 804 to 806 (ESF) provides a ligand contact to NADP(+). Ser-825 carries the phosphoserine modification. Lys-882 carries the N6-acetyllysine modification.

The protein in the N-terminal section; belongs to the GART family. In the C-terminal section; belongs to the aldehyde dehydrogenase family. ALDH1L subfamily. In terms of assembly, homotetramer. Phosphopantetheinylation at Ser-354 by AASDHPPT is required for the formyltetrahydrofolate dehydrogenase activity.

It localises to the cytoplasm. The protein resides in the cytosol. The enzyme catalyses (6R)-10-formyltetrahydrofolate + NADP(+) + H2O = (6S)-5,6,7,8-tetrahydrofolate + CO2 + NADPH + H(+). Functionally, cytosolic 10-formyltetrahydrofolate dehydrogenase that catalyzes the NADP(+)-dependent conversion of 10-formyltetrahydrofolate to tetrahydrofolate and carbon dioxide. May also have an NADP(+)-dependent aldehyde dehydrogenase activity towards formaldehyde, acetaldehyde, propionaldehyde, and benzaldehyde. The chain is Cytosolic 10-formyltetrahydrofolate dehydrogenase from Pongo abelii (Sumatran orangutan).